Consider the following 153-residue polypeptide: Cytochrome c oxidase subunit 5A, mitochondrial (153 aa).

The transit peptide at 1-20 directs the protein to the mitochondrion; that stretch reads MLRNTFTRAGGLSRITSVRF. Topologically, residues 21-88 are mitochondrial matrix; it reads AQTHALSNAA…EWGPRRPVLN (68 aa). The helical transmembrane segment at 89–111 threads the bilayer; that stretch reads KGDSSFIAKGVAAGLLFSVGLFA. Topologically, residues 112-153 are mitochondrial intermembrane; the sequence is VVRMAGGQDAKTMNKEWQLKSDEYLKSKNANPWGGYSQVQSK.

Belongs to the cytochrome c oxidase IV family. In terms of assembly, component of the cytochrome c oxidase (complex IV, CIV), a multisubunit enzyme composed of 12 subunits. The complex is composed of a catalytic core of 3 subunits COX1, COX2 and COX3, encoded in the mitochondrial DNA, and 9 supernumerary subunits COX4, COX5A (or COX5B), COX6, COX7, COX8, COX9, COX12, COX13 and COX26, which are encoded in the nuclear genome. COX5A is the predominant subunit V during aerobic/normoxic growth, it gets replaced by COX5B under anaerobic/hypoxic conditions. The complex exists as a monomer or a dimer and forms supercomplexes (SCs) in the inner mitochondrial membrane with a dimer of ubiquinol-cytochrome c oxidoreductase (cytochrome b-c1 complex, complex III, CIII), resulting in 2 different assemblies (supercomplexes III(2)IV and III(2)IV(2)). COX5A interacts with COR1, CYT1 and QCR6 at the CIII-CIV interface.

It is found in the mitochondrion inner membrane. The protein operates within energy metabolism; oxidative phosphorylation. In terms of biological role, component of the cytochrome c oxidase, the last enzyme in the mitochondrial electron transport chain which drives oxidative phosphorylation. The respiratory chain contains 3 multisubunit complexes succinate dehydrogenase (complex II, CII), ubiquinol-cytochrome c oxidoreductase (cytochrome b-c1 complex, complex III, CIII) and cytochrome c oxidase (complex IV, CIV), that cooperate to transfer electrons derived from NADH and succinate to molecular oxygen, creating an electrochemical gradient over the inner membrane that drives transmembrane transport and the ATP synthase. Cytochrome c oxidase is the component of the respiratory chain that catalyzes the reduction of oxygen to water. Electrons originating from reduced cytochrome c in the intermembrane space (IMS) are transferred via the dinuclear copper A center (CU(A)) of COX2 and heme A of COX1 to the active site in COX1, a binuclear center (BNC) formed by heme A3 and copper B (CU(B)). The BNC reduces molecular oxygen to 2 water molecules using 4 electrons from cytochrome c in the IMS and 4 protons from the mitochondrial matrix. The protein is Cytochrome c oxidase subunit 5A, mitochondrial (COX5A) of Saccharomyces cerevisiae (strain ATCC 204508 / S288c) (Baker's yeast).